The sequence spans 199 residues: Small ribosomal subunit protein uS14m (199 aa).

The disordered stretch occupies residues 28–67; that stretch reads LSTPAPEPAKPSSEETTESTEPATSVEDAGEPMKEKRITQ.

This sequence belongs to the universal ribosomal protein uS14 family. In terms of assembly, component of the mitochondrial ribosome small subunit (28S) which comprises a 12S rRNA and about 30 distinct proteins. Interacts with LIAT1.

Its subcellular location is the mitochondrion. The polypeptide is Small ribosomal subunit protein uS14m (mrps-14) (Caenorhabditis elegans).